The sequence spans 1248 residues: von Willebrand factor A domain-containing protein 5B2 (1248 aa).

One can recognise a VIT domain in the interval Met-1 to Arg-138. The disordered stretch occupies residues Val-184–Phe-204. The 174-residue stretch at Glu-354–Ile-527 folds into the VWFA domain. 5 disordered regions span residues Pro-590 to Thr-650, Ser-672 to Cys-710, Ala-751 to Gln-789, Ser-1008 to Leu-1037, and Asp-1126 to Leu-1168. Residues Ser-595 to Leu-619 show a composition bias toward polar residues. Low complexity-rich tracts occupy residues Ser-684–Pro-701, Ala-751–Ala-764, and Pro-780–Gln-789. The span at Ser-1127 to Gln-1145 shows a compositional bias: low complexity. A compositionally biased stretch (basic and acidic residues) spans Gly-1159–Leu-1168.

The protein is von Willebrand factor A domain-containing protein 5B2 (Vwa5b2) of Mus musculus (Mouse).